Here is a 170-residue protein sequence, read N- to C-terminus: Small ribosomal subunit protein uS5 (170 aa).

An S5 DRBM domain is found at 12–75 (WSELLVSVRR…NAAKKSMIRV (64 aa)).

This sequence belongs to the universal ribosomal protein uS5 family. Part of the 30S ribosomal subunit. Contacts proteins S4 and S8.

Functionally, with S4 and S12 plays an important role in translational accuracy. Located at the back of the 30S subunit body where it stabilizes the conformation of the head with respect to the body. This is Small ribosomal subunit protein uS5 from Wolbachia sp. subsp. Brugia malayi (strain TRS).